We begin with the raw amino-acid sequence, 157 residues long: ATP synthase subunit b' (157 aa).

Residues A22–F42 traverse the membrane as a helical segment.

The protein belongs to the ATPase B chain family. In terms of assembly, F-type ATPases have 2 components, F(1) - the catalytic core - and F(0) - the membrane proton channel. F(1) has five subunits: alpha(3), beta(3), gamma(1), delta(1), epsilon(1). F(0) has four main subunits: a(1), b(1), b'(1) and c(10-14). The alpha and beta chains form an alternating ring which encloses part of the gamma chain. F(1) is attached to F(0) by a central stalk formed by the gamma and epsilon chains, while a peripheral stalk is formed by the delta, b and b' chains.

The protein localises to the cellular thylakoid membrane. Its function is as follows. F(1)F(0) ATP synthase produces ATP from ADP in the presence of a proton or sodium gradient. F-type ATPases consist of two structural domains, F(1) containing the extramembraneous catalytic core and F(0) containing the membrane proton channel, linked together by a central stalk and a peripheral stalk. During catalysis, ATP synthesis in the catalytic domain of F(1) is coupled via a rotary mechanism of the central stalk subunits to proton translocation. Component of the F(0) channel, it forms part of the peripheral stalk, linking F(1) to F(0). The b'-subunit is a diverged and duplicated form of b found in plants and photosynthetic bacteria. This chain is ATP synthase subunit b', found in Synechococcus sp. (strain JA-3-3Ab) (Cyanobacteria bacterium Yellowstone A-Prime).